The following is a 306-amino-acid chain: 4-diphosphocytidyl-2-C-methyl-D-erythritol kinase (306 aa).

Lys23 is a catalytic residue. Residue 108–118 (PIAAGIGGGSA) coordinates ATP. Asp150 is an active-site residue.

This sequence belongs to the GHMP kinase family. IspE subfamily.

The catalysed reaction is 4-CDP-2-C-methyl-D-erythritol + ATP = 4-CDP-2-C-methyl-D-erythritol 2-phosphate + ADP + H(+). The protein operates within isoprenoid biosynthesis; isopentenyl diphosphate biosynthesis via DXP pathway; isopentenyl diphosphate from 1-deoxy-D-xylulose 5-phosphate: step 3/6. Functionally, catalyzes the phosphorylation of the position 2 hydroxy group of 4-diphosphocytidyl-2C-methyl-D-erythritol. The chain is 4-diphosphocytidyl-2-C-methyl-D-erythritol kinase from Rhodopseudomonas palustris (strain BisB18).